The sequence spans 355 residues: Peptide chain release factor 1 (355 aa).

Glutamine 232 is subject to N5-methylglutamine.

Belongs to the prokaryotic/mitochondrial release factor family. In terms of processing, methylated by PrmC. Methylation increases the termination efficiency of RF1.

The protein resides in the cytoplasm. Peptide chain release factor 1 directs the termination of translation in response to the peptide chain termination codons UAG and UAA. This chain is Peptide chain release factor 1, found in Thermobifida fusca (strain YX).